A 306-amino-acid chain; its full sequence is tRNA dimethylallyltransferase 2 (306 aa).

Residue 11 to 18 (GPTASGKT) coordinates ATP. 13–18 (TASGKT) contributes to the substrate binding site. Positions 36–39 (DSRQ) are interaction with substrate tRNA.

The protein belongs to the IPP transferase family. In terms of assembly, monomer. Mg(2+) serves as cofactor.

The catalysed reaction is adenosine(37) in tRNA + dimethylallyl diphosphate = N(6)-dimethylallyladenosine(37) in tRNA + diphosphate. Catalyzes the transfer of a dimethylallyl group onto the adenine at position 37 in tRNAs that read codons beginning with uridine, leading to the formation of N6-(dimethylallyl)adenosine (i(6)A). The sequence is that of tRNA dimethylallyltransferase 2 from Bacteroides fragilis (strain ATCC 25285 / DSM 2151 / CCUG 4856 / JCM 11019 / LMG 10263 / NCTC 9343 / Onslow / VPI 2553 / EN-2).